The primary structure comprises 185 residues: Large ribosomal subunit protein uL5 (185 aa).

It belongs to the universal ribosomal protein uL5 family. In terms of assembly, part of the 50S ribosomal subunit; part of the 5S rRNA/L5/L18/L25 subcomplex. Contacts the 5S rRNA and the P site tRNA. Forms a bridge to the 30S subunit in the 70S ribosome.

Its function is as follows. This is one of the proteins that bind and probably mediate the attachment of the 5S RNA into the large ribosomal subunit, where it forms part of the central protuberance. In the 70S ribosome it contacts protein S13 of the 30S subunit (bridge B1b), connecting the 2 subunits; this bridge is implicated in subunit movement. Contacts the P site tRNA; the 5S rRNA and some of its associated proteins might help stabilize positioning of ribosome-bound tRNAs. This is Large ribosomal subunit protein uL5 from Streptomyces coelicolor (strain ATCC BAA-471 / A3(2) / M145).